Reading from the N-terminus, the 231-residue chain is Aquaporin Z (231 aa).

2 consecutive transmembrane segments (helical) span residues 9 to 29 and 34 to 54; these read CFGT…AAGF and IGFA…AFAV. The short motif at 63 to 65 is the NPA 1 element; it reads NPA. The next 3 membrane-spanning stretches (helical) occupy residues 82-102, 129-149, and 156-176; these read VGYV…LYLI, YSML…LLVI, and FAPA…IHLI. The NPA 2 signature appears at 186-188; that stretch reads NPA. Residues 202 to 222 traverse the membrane as a helical segment; it reads LEQLWFFWVVPIVGGIIGGLI.

It belongs to the MIP/aquaporin (TC 1.A.8) family. Homotetramer.

Its subcellular location is the cell inner membrane. The enzyme catalyses H2O(in) = H2O(out). Functionally, channel that permits osmotically driven movement of water in both directions. It is involved in the osmoregulation and in the maintenance of cell turgor during volume expansion in rapidly growing cells. It mediates rapid entry or exit of water in response to abrupt changes in osmolarity. The sequence is that of Aquaporin Z from Escherichia coli O6:H1 (strain CFT073 / ATCC 700928 / UPEC).